A 603-amino-acid chain; its full sequence is Serine/threonine-protein kinase PLK1 (603 aa).

The segment at 1-35 (MSAAVTAGKLARAPADPGKAGVPGVAAPGAPAAAP) is disordered. Ser2 carries the N-acetylserine modification. Thr6 is subject to Phosphothreonine. Over residues 13-35 (APADPGKAGVPGVAAPGAPAAAP) the composition is skewed to low complexity. Residue Lys19 forms a Glycyl lysine isopeptide (Lys-Gly) (interchain with G-Cter in ubiquitin) linkage. A Protein kinase domain is found at 53-305 (YVRGRFLGKG…INELLNDEFF (253 aa)). Residues 59–67 (LGKGGFAKC) and Lys82 each bind ATP. At Ser103 the chain carries Phosphoserine. Glu131 is an ATP binding site. Ser137 is subject to Phosphoserine. Asp176 serves as the catalytic Proton acceptor. ATP is bound by residues 178–181 (KLGN) and Asp194. The interval 194–221 (DFGLATKVEYDGERKKTLCGTPNYIAPE) is activation loop. Thr210 is subject to Phosphothreonine; by AURKA. A Phosphothreonine modification is found at Thr214. The residue at position 269 (Ser269) is a Phosphoserine; by autocatalysis. The residue at position 335 (Ser335) is a Phosphoserine. A D-box that targets the protein for proteasomal degradation in anaphase motif is present at residues 337-340 (RKPL). Residue Lys338 forms a Glycyl lysine isopeptide (Lys-Gly) (interchain with G-Cter in SUMO2) linkage. Residues 338 to 364 (KPLTVLNKGLENPLPERPREKEEPVVR) are disordered. A compositionally biased stretch (basic and acidic residues) spans 351–364 (LPERPREKEEPVVR). Phosphoserine occurs at positions 375 and 450. Residues 410 to 488 (WVSKWVDYSD…LKYFRNYMSE (79 aa)) form the POLO box 1 domain. Lys492 is covalently cross-linked (Glycyl lysine isopeptide (Lys-Gly) (interchain with G-Cter in ubiquitin)). A linker region spans residues 493 to 507 (AGANITPREGDELAR). Thr498 carries the post-translational modification Phosphothreonine. In terms of domain architecture, POLO box 2 spans 510–592 (YLRTWFRTRS…ARTMVDKLLS (83 aa)). An important for interaction with phosphorylated proteins region spans residues 538–540 (HTK).

It belongs to the protein kinase superfamily. Ser/Thr protein kinase family. CDC5/Polo subfamily. In terms of assembly, interacts with CEP170. Interacts with EVI5. Interacts with FAM29A. Interacts with SLX4/BTBD12. Interacts with TTDN1. Interacts (via POLO-box domain) with the phosphorylated form of BUB1, CDC25C and CENPU. Interacts with KIF2A. Interacts with CYLD. Part of an astrin (SPAG5)-kinastrin (SKAP) complex containing KNSTRN, SPAG5, PLK1, DYNLL1 and SGO2. Interacts with BIRC6/bruce. Interacts with CDK1-phosphorylated FRY; this interaction occurs in mitotic cells, but not in interphase cells. FRY interaction facilitates AURKA-mediated PLK1 phosphorylation. Interacts with CDK1-phosphorylated DCTN6 during mitotic prometaphase; the interaction facilitates recruitment to kinetochores. Interacts with CEP68; the interaction phosphorylates CEP68. Interacts (via POLO-box domain) with DCTN1. Interacts with CEP20 in later G1, S, G2 and M phases of the cell cycle; this interaction recruits PLK1 to centrosomes, a step required for S phase progression. Interacts with KLHL22. Interacts (via POLO box domains) with NEDD9/HEF1 (via C-terminus). Interacts with FIRRM (via N-terminus region); required for maintaining, but not activating, PLK1 kinase activity. Interacts with FZR1. Interacts with SKA3; the interaction promotes the stability of PLK1; the interaction promotes the stability of PLK1. Interacts with the MTMR3:MTMR4 heterooligomer; brings CEP55 and PLK1 together during early mitosis, regulating the phosphorylation of CEP55 by PLK1 and its recruitment to the midbody where it can mediate cell abscission. Catalytic activity is enhanced by phosphorylation of Thr-210. Phosphorylation at Thr-210 is first detected on centrosomes in the G2 phase of the cell cycle, peaks in prometaphase and gradually disappears from centrosomes during anaphase. Dephosphorylation at Thr-210 at centrosomes is probably mediated by protein phosphatase 1C (PP1C), via interaction with PPP1R12A/MYPT1. Autophosphorylation and phosphorylation of Ser-137 may not be significant for the activation of PLK1 during mitosis, but may enhance catalytic activity during recovery after DNA damage checkpoint. Phosphorylated in vitro by STK10. Post-translationally, ubiquitinated by the anaphase promoting complex/cyclosome (APC/C) in anaphase and following DNA damage, leading to its degradation by the proteasome. Ubiquitination is mediated via its interaction with FZR1/CDH1. Ubiquitination and subsequent degradation prevents entry into mitosis and is essential to maintain an efficient G2 DNA damage checkpoint. Monoubiquitination at Lys-492 by the BCR(KLHL22) ubiquitin ligase complex does not lead to degradation: it promotes PLK1 dissociation from phosphoreceptor proteins and subsequent removal from kinetochores, allowing silencing of the spindle assembly checkpoint (SAC) and chromosome segregation. As to expression, placenta and colon.

The protein resides in the nucleus. Its subcellular location is the chromosome. The protein localises to the centromere. It is found in the kinetochore. It localises to the cytoplasm. The protein resides in the cytoskeleton. Its subcellular location is the microtubule organizing center. The protein localises to the centrosome. It is found in the spindle. It localises to the midbody. The enzyme catalyses L-seryl-[protein] + ATP = O-phospho-L-seryl-[protein] + ADP + H(+). The catalysed reaction is L-threonyl-[protein] + ATP = O-phospho-L-threonyl-[protein] + ADP + H(+). Activated by phosphorylation of Thr-210 by AURKA; phosphorylation by AURKA is enhanced by BORA. Once activated, activity is stimulated by binding target proteins. Binding of target proteins has no effect on the non-activated kinase. Several inhibitors targeting PLKs are currently in development and are under investigation in a growing number of clinical trials, such as BI 2536, an ATP-competitive PLK1 inhibitor or BI 6727, a dihydropteridinone that specifically inhibits the catalytic activity of PLK1. Its function is as follows. Serine/threonine-protein kinase that performs several important functions throughout M phase of the cell cycle, including the regulation of centrosome maturation and spindle assembly, the removal of cohesins from chromosome arms, the inactivation of anaphase-promoting complex/cyclosome (APC/C) inhibitors, and the regulation of mitotic exit and cytokinesis. Polo-like kinase proteins act by binding and phosphorylating proteins that are already phosphorylated on a specific motif recognized by the POLO box domains. Phosphorylates BORA, BUB1B/BUBR1, CCNB1, CDC25C, CEP55, ECT2, ERCC6L, FBXO5/EMI1, FOXM1, KIF20A/MKLP2, CENPU, NEDD1, NINL, NPM1, NUDC, PKMYT1/MYT1, KIZ, MRE11, PPP1R12A/MYPT1, POLQ, PRC1, RACGAP1/CYK4, RAD51, RHNO1, SGO1, STAG2/SA2, TEX14, TOPORS, p73/TP73, TPT1, WEE1 and HNRNPU. Plays a key role in centrosome functions and the assembly of bipolar spindles by phosphorylating KIZ, NEDD1 and NINL. NEDD1 phosphorylation promotes subsequent targeting of the gamma-tubulin ring complex (gTuRC) to the centrosome, an important step for spindle formation. Phosphorylation of NINL component of the centrosome leads to NINL dissociation from other centrosomal proteins. Involved in mitosis exit and cytokinesis by phosphorylating CEP55, ECT2, KIF20A/MKLP2, CENPU, PRC1 and RACGAP1. Recruited at the central spindle by phosphorylating and docking PRC1 and KIF20A/MKLP2; creates its own docking sites on PRC1 and KIF20A/MKLP2 by mediating phosphorylation of sites subsequently recognized by the POLO box domains. Phosphorylates RACGAP1, thereby creating a docking site for the Rho GTP exchange factor ECT2 that is essential for the cleavage furrow formation. Promotes the central spindle recruitment of ECT2. Plays a central role in G2/M transition of mitotic cell cycle by phosphorylating CCNB1, CDC25C, FOXM1, CENPU, PKMYT1/MYT1, PPP1R12A/MYPT1 and WEE1. Part of a regulatory circuit that promotes the activation of CDK1 by phosphorylating the positive regulator CDC25C and inhibiting the negative regulators WEE1 and PKMYT1/MYT1. Also acts by mediating phosphorylation of cyclin-B1 (CCNB1) on centrosomes in prophase. Phosphorylates FOXM1, a key mitotic transcription regulator, leading to enhance FOXM1 transcriptional activity. Involved in kinetochore functions and sister chromatid cohesion by phosphorylating BUB1B/BUBR1, FBXO5/EMI1 and STAG2/SA2. PLK1 is high on non-attached kinetochores suggesting a role of PLK1 in kinetochore attachment or in spindle assembly checkpoint (SAC) regulation. Required for kinetochore localization of BUB1B. Regulates the dissociation of cohesin from chromosomes by phosphorylating cohesin subunits such as STAG2/SA2. Phosphorylates SGO1: required for spindle pole localization of isoform 3 of SGO1 and plays a role in regulating its centriole cohesion function. Mediates phosphorylation of FBXO5/EMI1, a negative regulator of the APC/C complex during prophase, leading to FBXO5/EMI1 ubiquitination and degradation by the proteasome. Acts as a negative regulator of p53 family members: phosphorylates TOPORS, leading to inhibit the sumoylation of p53/TP53 and simultaneously enhance the ubiquitination and subsequent degradation of p53/TP53. Phosphorylates the transactivation domain of the transcription factor p73/TP73, leading to inhibit p73/TP73-mediated transcriptional activation and pro-apoptotic functions. Phosphorylates BORA, and thereby promotes the degradation of BORA. Contributes to the regulation of AURKA function. Also required for recovery after DNA damage checkpoint and entry into mitosis. Phosphorylates MISP, leading to stabilization of cortical and astral microtubule attachments required for proper spindle positioning. Together with MEIKIN, acts as a regulator of kinetochore function during meiosis I: required both for mono-orientation of kinetochores on sister chromosomes and protection of centromeric cohesin from separase-mediated cleavage. Phosphorylates CEP68 and is required for its degradation. Regulates nuclear envelope breakdown during prophase by phosphorylating DCTN1 resulting in its localization in the nuclear envelope. Phosphorylates the heat shock transcription factor HSF1, promoting HSF1 nuclear translocation upon heat shock. Phosphorylates HSF1 also in the early mitotic period; this phosphorylation regulates HSF1 localization to the spindle pole, the recruitment of the SCF(BTRC) ubiquitin ligase complex induicing HSF1 degradation, and hence mitotic progression. Regulates mitotic progression by phosphorylating RIOK2. Through the phosphorylation of DZIP1 regulates the localization during mitosis of the BBSome, a ciliary protein complex involved in cilium biogenesis. Regulates DNA repair during mitosis by mediating phosphorylation of POLQ and RHNO1, thereby promoting POLQ recruitment to DNA damage sites. Phosphorylates ATXN10 which may play a role in the regulation of cytokinesis and may stimulate the proteasome-mediated degradation of ATXN10. The sequence is that of Serine/threonine-protein kinase PLK1 (PLK1) from Homo sapiens (Human).